The sequence spans 384 residues: MSEQLVTPENVTTKDGKINLLDLNRQQMREFFKDLGEKPFRADQVMKWMYHYCCDNFDEMTDINKVLRGKLKEVAEIRAPEVVEEQRSSDGTIKWAIAVGDQRVETVYIPEDDRATLCVSSQVGCALECKFCSTAQQGFNRNLRVSEIIGQVWRAAKIVGAAKVTGQRPITNVVMMGMGEPLLNLNNVVPAMEIMLDDFGFGLSKRRVTLSTSGVVPALDKLGDMIDVALAISLHAPNDEIRDEIVPINKKYNIETFLAAVRRYLGKSNANQGRVTIEYVMLDHVNDGTEHAHQLAELLKDTPCKINLIPWNPFPGAPYGRSSNSRIDRFSKVLMSYGFTTIVRKTRGDDIDAACGQLAGDVIDRTKRTLRKRMQGEAIDIKAV.

Glu-105 functions as the Proton acceptor in the catalytic mechanism. The Radical SAM core domain maps to 111-350 (EDDRATLCVS…TIVRKTRGDD (240 aa)). Cys-118 and Cys-355 form a disulfide bridge. Cys-125, Cys-129, and Cys-132 together coordinate [4Fe-4S] cluster. S-adenosyl-L-methionine contacts are provided by residues 179 to 180 (GE), Ser-211, 233 to 235 (SLH), and Asn-312. Catalysis depends on Cys-355, which acts as the S-methylcysteine intermediate.

Belongs to the radical SAM superfamily. RlmN family. [4Fe-4S] cluster is required as a cofactor.

It localises to the cytoplasm. The enzyme catalyses adenosine(2503) in 23S rRNA + 2 reduced [2Fe-2S]-[ferredoxin] + 2 S-adenosyl-L-methionine = 2-methyladenosine(2503) in 23S rRNA + 5'-deoxyadenosine + L-methionine + 2 oxidized [2Fe-2S]-[ferredoxin] + S-adenosyl-L-homocysteine. The catalysed reaction is adenosine(37) in tRNA + 2 reduced [2Fe-2S]-[ferredoxin] + 2 S-adenosyl-L-methionine = 2-methyladenosine(37) in tRNA + 5'-deoxyadenosine + L-methionine + 2 oxidized [2Fe-2S]-[ferredoxin] + S-adenosyl-L-homocysteine. In terms of biological role, specifically methylates position 2 of adenine 2503 in 23S rRNA and position 2 of adenine 37 in tRNAs. m2A2503 modification seems to play a crucial role in the proofreading step occurring at the peptidyl transferase center and thus would serve to optimize ribosomal fidelity. In Escherichia coli O6:H1 (strain CFT073 / ATCC 700928 / UPEC), this protein is Dual-specificity RNA methyltransferase RlmN.